A 319-amino-acid chain; its full sequence is GATA transcription factor 18 (319 aa).

The segment covering 1–15 (MPDAAAAAAAAQDAD) has biased composition (low complexity). A disordered region spans residues 1–74 (MPDAAAAAAA…AAPEPVSALL (74 aa)). The span at 32-60 (NNDDDGDDGTEEDEEEDDDEEGDEEELPP) shows a compositional bias: acidic residues. One can recognise a Tify domain in the interval 74 to 109 (LPGSPNQLTLLFQGEVYVFESVTPEKVQAVLLLLGS). The 43-residue stretch at 143–185 (RVASLIRFREKRKERNFDKKIRYAVRKEVALRMQRRKGQFAGR) folds into the CCT domain. The GATA-type zinc-finger motif lies at 215–242 (CQNCGTSEKMTPAMRRGPAGPRTLCNAC). A disordered region spans residues 292-319 (ITASHGEVMGDSTPANEAEIGAPKAQSQ).

It belongs to the type IV zinc-finger family. Class C subfamily.

Its subcellular location is the nucleus. Functionally, transcriptional activator that specifically binds 5'-GATA-3' or 5'-GAT-3' motifs within gene promoters. The sequence is that of GATA transcription factor 18 from Oryza sativa subsp. indica (Rice).